Here is an 87-residue protein sequence, read N- to C-terminus: Large ribosomal subunit protein bL31B (87 aa).

Belongs to the bacterial ribosomal protein bL31 family. Type B subfamily. As to quaternary structure, part of the 50S ribosomal subunit.

The protein is Large ribosomal subunit protein bL31B of Burkholderia vietnamiensis (strain G4 / LMG 22486) (Burkholderia cepacia (strain R1808)).